Here is a 229-residue protein sequence, read N- to C-terminus: ATP-dependent dethiobiotin synthetase BioD (229 aa).

12–17 (GVGKTV) serves as a coordination point for ATP. Thr-16 provides a ligand contact to Mg(2+). Lys-37 is an active-site residue. Thr-41 lines the substrate pocket. ATP-binding positions include Asp-53, 112 to 115 (EGAG), and 201 to 203 (PAG). Mg(2+) is bound by residues Asp-53 and Glu-112.

This sequence belongs to the dethiobiotin synthetase family. Homodimer. The cofactor is Mg(2+).

The protein resides in the cytoplasm. It carries out the reaction (7R,8S)-7,8-diammoniononanoate + CO2 + ATP = (4R,5S)-dethiobiotin + ADP + phosphate + 3 H(+). It functions in the pathway cofactor biosynthesis; biotin biosynthesis; biotin from 7,8-diaminononanoate: step 1/2. Its function is as follows. Catalyzes a mechanistically unusual reaction, the ATP-dependent insertion of CO2 between the N7 and N8 nitrogen atoms of 7,8-diaminopelargonic acid (DAPA, also called 7,8-diammoniononanoate) to form a ureido ring. The chain is ATP-dependent dethiobiotin synthetase BioD from Mycobacterium sp. (strain KMS).